The sequence spans 492 residues: Phosphatidylinositol 4-kinase type 2-beta (492 aa).

Residues 1–11 show a composition bias toward basic and acidic residues; sequence MEPKQTADARD. The segment at 1–98 is disordered; sequence MEPKQTADAR…SDRENMSGGH (98 aa). The PI3K/PI4K catalytic domain occupies 127–462; that stretch reads GVFPERISQG…VQMPRVVVER (336 aa). Positions 133 to 139 are G-loop; that stretch reads ISQGSSG. ATP contacts are provided by S140 and K155. The interval 160 to 162 is important for substrate binding; sequence EPY. An important for interaction with membranes region spans residues 168 to 181; the sequence is KWTKYFHKICCPCC. ATP is bound by residues 264–267 and 278–279; these read QLFV and RK. Residues 271–279 are important for interaction with membranes; the sequence is KEADYWLRK. The interval 308–316 is catalytic loop; it reads RNTDRGNDN. The tract at residues 353–373 is activation loop; that stretch reads AIDNGLAFPFKHPDEWRAYPF. D355 serves as a coordination point for ATP. The tract at residues 368–377 is important for interaction with membranes; the sequence is WRAYPFHWAW.

This sequence belongs to the PI3/PI4-kinase family. Type II PI4K subfamily.

Its subcellular location is the cytoplasm. It is found in the cytosol. The protein resides in the golgi apparatus membrane. It localises to the endoplasmic reticulum membrane. The protein localises to the cell membrane. Its subcellular location is the early endosome membrane. It catalyses the reaction a 1,2-diacyl-sn-glycero-3-phospho-(1D-myo-inositol) + ATP = a 1,2-diacyl-sn-glycero-3-phospho-(1D-myo-inositol 4-phosphate) + ADP + H(+). In terms of biological role, contributes to the overall PI4-kinase activity of the cell. This contribution may be especially significant in plasma membrane, endosomal and Golgi compartments. The phosphorylation of phosphatidylinositol (PI) to PI4P is the first committed step in the generation of phosphatidylinositol 4,5-bisphosphate (PIP2), a precursor of the second messenger inositol 1,4,5-trisphosphate (InsP3). In Xenopus tropicalis (Western clawed frog), this protein is Phosphatidylinositol 4-kinase type 2-beta (pi4k2b).